The following is a 255-amino-acid chain: Diphthine--ammonia ligase (255 aa).

It belongs to the Diphthine--ammonia ligase family.

The enzyme catalyses diphthine-[translation elongation factor 2] + NH4(+) + ATP = diphthamide-[translation elongation factor 2] + AMP + diphosphate + H(+). It participates in protein modification; peptidyl-diphthamide biosynthesis. Its function is as follows. Amidase that catalyzes the last step of diphthamide biosynthesis using ammonium and ATP. Diphthamide biosynthesis consists in the conversion of an L-histidine residue in the translation elongation factor eEF-2 (EEF2) to diphthamide. The sequence is that of Diphthine--ammonia ligase (dph6) from Danio rerio (Zebrafish).